The following is a 392-amino-acid chain: Tropomodulin (392 aa).

Disordered regions lie at residues 1–30 (MSQAKTDYYSEEKTFSAPSANSQQGTQLPS), 59–90 (DLNNDFDPDNSMLPPSQRCRDQTDKEPTGPYK), and 118–138 (QKRGKVYDSDSGRNSEEPENG). Residues 16–29 (SAPSANSQQGTQLP) show a composition bias toward polar residues. 2 stretches are compositionally biased toward basic and acidic residues: residues 76-90 (RCRDQTDKEPTGPYK) and 122-138 (KVYDSDSGRNSEEPENG).

This sequence belongs to the tropomodulin family. In terms of assembly, binds to the N-terminus of actin.

It localises to the cytoplasm. The protein localises to the cytoskeleton. Acts as the pointed end capping protein which maintains the length and dynamics of the actin filament. Blocks the elongation and depolymerization of the actin filaments at the pointed end. This is Tropomodulin (unc-94) from Caenorhabditis elegans.